A 141-amino-acid polypeptide reads, in one-letter code: Large ribosomal subunit protein uL11 (141 aa).

Belongs to the universal ribosomal protein uL11 family. In terms of assembly, part of the ribosomal stalk of the 50S ribosomal subunit. Interacts with L10 and the large rRNA to form the base of the stalk. L10 forms an elongated spine to which L12 dimers bind in a sequential fashion forming a multimeric L10(L12)X complex. In terms of processing, one or more lysine residues are methylated.

Forms part of the ribosomal stalk which helps the ribosome interact with GTP-bound translation factors. The chain is Large ribosomal subunit protein uL11 from Synechococcus sp. (strain WH7803).